Consider the following 90-residue polypeptide: Small ribosomal subunit protein uS15 (90 aa).

It belongs to the universal ribosomal protein uS15 family. Part of the 30S ribosomal subunit. Forms a bridge to the 50S subunit in the 70S ribosome, contacting the 23S rRNA.

In terms of biological role, one of the primary rRNA binding proteins, it binds directly to 16S rRNA where it helps nucleate assembly of the platform of the 30S subunit by binding and bridging several RNA helices of the 16S rRNA. Forms an intersubunit bridge (bridge B4) with the 23S rRNA of the 50S subunit in the ribosome. The chain is Small ribosomal subunit protein uS15 from Helicobacter acinonychis (strain Sheeba).